A 346-amino-acid polypeptide reads, in one-letter code: B3 domain-containing protein At5g60142 (346 aa).

The TF-B3 DNA-binding region spans 13 to 109 (PKFFKVYLPD…CFNFCIYGRA (97 aa)). Disordered regions lie at residues 158–179 (QDYNEEDTSSEDITALDDADND) and 192–243 (TSSE…HDRQ). Residues 192-217 (TSSEDIIVIDDDDDDDDQDYGDDDHA) show a composition bias toward acidic residues. Over residues 218 to 229 (DVEKERWRGVKT) the composition is skewed to basic and acidic residues.

The protein localises to the nucleus. The polypeptide is B3 domain-containing protein At5g60142 (Arabidopsis thaliana (Mouse-ear cress)).